The following is a 131-amino-acid chain: Ribosome-binding factor A (131 aa).

This sequence belongs to the RbfA family. In terms of assembly, monomer. Binds 30S ribosomal subunits, but not 50S ribosomal subunits or 70S ribosomes.

The protein resides in the cytoplasm. Its function is as follows. One of several proteins that assist in the late maturation steps of the functional core of the 30S ribosomal subunit. Associates with free 30S ribosomal subunits (but not with 30S subunits that are part of 70S ribosomes or polysomes). Required for efficient processing of 16S rRNA. May interact with the 5'-terminal helix region of 16S rRNA. This chain is Ribosome-binding factor A, found in Thermotoga petrophila (strain ATCC BAA-488 / DSM 13995 / JCM 10881 / RKU-1).